The primary structure comprises 505 residues: Histidine ammonia-lyase (505 aa).

The 5-imidazolinone (Ala-Gly) cross-link spans 141-143 (ASG). The residue at position 142 (S142) is a 2,3-didehydroalanine (Ser).

Belongs to the PAL/histidase family. Post-translationally, contains an active site 4-methylidene-imidazol-5-one (MIO), which is formed autocatalytically by cyclization and dehydration of residues Ala-Ser-Gly.

Its subcellular location is the cytoplasm. The catalysed reaction is L-histidine = trans-urocanate + NH4(+). It participates in amino-acid degradation; L-histidine degradation into L-glutamate; N-formimidoyl-L-glutamate from L-histidine: step 1/3. The polypeptide is Histidine ammonia-lyase (Bacillus cereus (strain 03BB102)).